A 262-amino-acid chain; its full sequence is CD99 antigen-like protein 2 (262 aa).

Positions 1 to 25 are cleaved as a signal peptide; it reads MVAWRSAFLVCLAFSLATLVQRGSG. Residues 26–185 are Extracellular-facing; it reads DFDDFNLEDA…PGSGMVAEPG (160 aa). The tract at residues 38-181 is disordered; that stretch reads ETSSVKQPWD…SNDDPGSGMV (144 aa). Composition is skewed to low complexity over residues 49–60 and 98–119; these read TTTTTTNRPGTT and VTTT…GNDF. 2 stretches are compositionally biased toward basic and acidic residues: residues 125-136 and 159-168; these read LDDRNDRDDGRR and YKPDKGKGDG. O-linked (Xyl...) (chondroitin sulfate) serine glycosylation is present at S178. A helical membrane pass occupies residues 186–206; that stretch reads TIAGVASALAMALIGAVSSYI. At 207-262 the chain is on the cytoplasmic side; sequence SYQQKKFCFSIQQGLNADYVKGENLEAVVCEEPQVKYSTLHTQSAEPPPPPEPARI.

Belongs to the CD99 family. In terms of processing, O-glycosylated. Detected in cerebrospinal fluid (at protein level). Expressed in many tissues, with low expression in thymus.

The protein resides in the cell membrane. It is found in the cell junction. It localises to the secreted. Its function is as follows. Plays a role in a late step of leukocyte extravasation helping cells to overcome the endothelial basement membrane. Acts at the same site as, but independently of, PECAM1. Homophilic adhesion molecule, but these interactions may not be required for cell aggregation. The protein is CD99 antigen-like protein 2 (CD99L2) of Homo sapiens (Human).